The chain runs to 390 residues: S-adenosylmethionine synthase 3 (390 aa).

A Mg(2+)-binding site is contributed by glutamate 9. Histidine 15 contributes to the ATP binding site. K(+) is bound at residue glutamate 43. Glutamate 56 and glutamine 99 together coordinate L-methionine. Residues aspartate 167–lysine 169, serine 235–phenylalanine 238, aspartate 246, arginine 252–lysine 253, alanine 269, lysine 273, and lysine 277 contribute to the ATP site. Aspartate 246 contacts L-methionine. Lysine 277 serves as a coordination point for L-methionine.

This sequence belongs to the AdoMet synthase family. In terms of assembly, homotetramer. Mn(2+) serves as cofactor. Mg(2+) is required as a cofactor. The cofactor is Co(2+). It depends on K(+) as a cofactor. Requires NH4(+) as cofactor. As to expression, mostly expressed in roots, and, to a lower extent, in hypocotyls and cotyledons.

It is found in the cytoplasm. The catalysed reaction is L-methionine + ATP + H2O = S-adenosyl-L-methionine + phosphate + diphosphate. It functions in the pathway amino-acid biosynthesis; S-adenosyl-L-methionine biosynthesis; S-adenosyl-L-methionine from L-methionine: step 1/1. Its activity is regulated as follows. Inhibited by products of SAMS reaction (SAM, Pi, PPi), substrate analogs (cycloleucine and ethionine), and alternative nucleotides (GTP, CTP and ADP). Strongly repressed by PPPi. Catalyzes the formation of S-adenosylmethionine from methionine and ATP. The reaction comprises two steps that are both catalyzed by the same enzyme: formation of S-adenosylmethionine (AdoMet) and triphosphate, and subsequent hydrolysis of the triphosphate. This chain is S-adenosylmethionine synthase 3 (SAMS3), found in Catharanthus roseus (Madagascar periwinkle).